The chain runs to 206 residues: Large ribosomal subunit protein uL4 (206 aa).

Belongs to the universal ribosomal protein uL4 family. As to quaternary structure, part of the 50S ribosomal subunit.

In terms of biological role, one of the primary rRNA binding proteins, this protein initially binds near the 5'-end of the 23S rRNA. It is important during the early stages of 50S assembly. It makes multiple contacts with different domains of the 23S rRNA in the assembled 50S subunit and ribosome. Its function is as follows. Forms part of the polypeptide exit tunnel. The polypeptide is Large ribosomal subunit protein uL4 (Methylobacterium radiotolerans (strain ATCC 27329 / DSM 1819 / JCM 2831 / NBRC 15690 / NCIMB 10815 / 0-1)).